Here is a 165-residue protein sequence, read N- to C-terminus: Nucleotide-binding protein RoseRS_0530 (165 aa).

Belongs to the YajQ family.

Nucleotide-binding protein. This is Nucleotide-binding protein RoseRS_0530 from Roseiflexus sp. (strain RS-1).